A 328-amino-acid chain; its full sequence is GMP reductase (328 aa).

The active-site Thioimidate intermediate is C176. 205 to 228 (IIADGGIRTHGDIAKSIRFGASMI) provides a ligand contact to NADP(+).

It belongs to the IMPDH/GMPR family. GuaC type 2 subfamily.

It carries out the reaction IMP + NH4(+) + NADP(+) = GMP + NADPH + 2 H(+). Catalyzes the irreversible NADPH-dependent deamination of GMP to IMP. It functions in the conversion of nucleobase, nucleoside and nucleotide derivatives of G to A nucleotides, and in maintaining the intracellular balance of A and G nucleotides. The polypeptide is GMP reductase (Streptococcus pneumoniae serotype 2 (strain D39 / NCTC 7466)).